Reading from the N-terminus, the 62-residue chain is uncharacterized protein (62 aa).

This is an uncharacterized protein from Sulfolobus islandicus filamentous virus (isolate Iceland/Hveragerdi) (SIFV).